Consider the following 554-residue polypeptide: CTP synthase (554 aa).

An amidoligase domain region spans residues 1–265; it reads MTPLIFVTGG…DEIVIDQFKL (265 aa). Ser13 provides a ligand contact to CTP. Ser13 serves as a coordination point for UTP. ATP is bound by residues 14 to 19 and Asp71; that span reads SLGKGI. Residues Asp71 and Glu139 each coordinate Mg(2+). CTP contacts are provided by residues 146-148, 186-191, and Lys222; these read DIE and KTKPTQ. UTP contacts are provided by residues 186 to 191 and Lys222; that span reads KTKPTQ. The region spanning 292–545 is the Glutamine amidotransferase type-1 domain; sequence TIAVVGKYVD…VKAARARKAG (254 aa). Gly353 contributes to the L-glutamine binding site. Catalysis depends on Cys380, which acts as the Nucleophile; for glutamine hydrolysis. Residues 381–384, Glu404, and Arg471 each bind L-glutamine; that span reads YGMQ. Residues His518 and Glu520 contribute to the active site.

The protein belongs to the CTP synthase family. Homotetramer.

It carries out the reaction UTP + L-glutamine + ATP + H2O = CTP + L-glutamate + ADP + phosphate + 2 H(+). The catalysed reaction is L-glutamine + H2O = L-glutamate + NH4(+). The enzyme catalyses UTP + NH4(+) + ATP = CTP + ADP + phosphate + 2 H(+). The protein operates within pyrimidine metabolism; CTP biosynthesis via de novo pathway; CTP from UDP: step 2/2. With respect to regulation, allosterically activated by GTP, when glutamine is the substrate; GTP has no effect on the reaction when ammonia is the substrate. The allosteric effector GTP functions by stabilizing the protein conformation that binds the tetrahedral intermediate(s) formed during glutamine hydrolysis. Inhibited by the product CTP, via allosteric rather than competitive inhibition. In terms of biological role, catalyzes the ATP-dependent amination of UTP to CTP with either L-glutamine or ammonia as the source of nitrogen. Regulates intracellular CTP levels through interactions with the four ribonucleotide triphosphates. The chain is CTP synthase from Xylella fastidiosa (strain 9a5c).